Consider the following 224-residue polypeptide: Mammalian ependymin-related protein 1 (224 aa).

An N-terminal signal peptide occupies residues 1 to 37 (MPARAPRRLVQGPRGTWLLGSLWVWVLCGLGMAGSLG). 3 cysteine pairs are disulfide-bonded: Cys-42/Cys-172, Cys-88/Cys-222, and Cys-113/Cys-210. N-linked (GlcNAc...) asparagine glycosylation is found at Asn-130 and Asn-182.

The protein belongs to the ependymin family. In terms of assembly, homodimer. N-glycosylated; the glycan contains mannose-6-phosphate moieties. In terms of tissue distribution, detected in brain, small intestine and in soleus, extensor digitorum longus and white gastrocnemius (at protein level). Detected in brain and skeletal muscle, and at lower leavels in heart.

It localises to the lysosome lumen. The protein localises to the secreted. Functionally, binds anionic lipids and gangliosides at acidic pH. The protein is Mammalian ependymin-related protein 1 (Epdr1) of Mus musculus (Mouse).